A 335-amino-acid chain; its full sequence is Aspartate--ammonia ligase (335 aa).

It belongs to the class-II aminoacyl-tRNA synthetase family. AsnA subfamily.

It localises to the cytoplasm. The catalysed reaction is L-aspartate + NH4(+) + ATP = L-asparagine + AMP + diphosphate + H(+). Its pathway is amino-acid biosynthesis; L-asparagine biosynthesis; L-asparagine from L-aspartate (ammonia route): step 1/1. This Levilactobacillus brevis (strain ATCC 367 / BCRC 12310 / CIP 105137 / JCM 1170 / LMG 11437 / NCIMB 947 / NCTC 947) (Lactobacillus brevis) protein is Aspartate--ammonia ligase.